The following is a 268-amino-acid chain: Small ribosomal subunit protein uS2 (268 aa).

Belongs to the universal ribosomal protein uS2 family.

The protein is Small ribosomal subunit protein uS2 of Coprothermobacter proteolyticus (strain ATCC 35245 / DSM 5265 / OCM 4 / BT).